A 642-amino-acid polypeptide reads, in one-letter code: Chaperone protein HtpG (642 aa).

Residues 1–349 (MSAATETEVR…SADLPLNVSR (349 aa)) form an a; substrate-binding region. Positions 216–238 (ELPPAPPAKEGEEPEPPKTPEWE) are disordered. Positions 224 to 236 (KEGEEPEPPKTPE) are enriched in basic and acidic residues. The segment at 350–570 (EILQQNRQVE…AHDMSATLER (221 aa)) is b. The segment at 571 to 642 (LLKEAGQEVP…VKRLNKLLMG (72 aa)) is c.

This sequence belongs to the heat shock protein 90 family. Homodimer.

It is found in the cytoplasm. In terms of biological role, molecular chaperone. Has ATPase activity. This is Chaperone protein HtpG from Magnetococcus marinus (strain ATCC BAA-1437 / JCM 17883 / MC-1).